The sequence spans 261 residues: Epidermal growth factor-binding protein type B (261 aa).

Residues 1-16 (MWFLILFLALSLGGID) form the signal peptide. The propeptide at 17–24 (AAPPLQSR) is activation peptide. The 234-residue stretch at 25 to 258 (VVGGFNCKKN…FNSWIKDTMM (234 aa)) folds into the Peptidase S1 domain. Disulfide bonds link Cys31-Cys173, Cys50-Cys66, Cys152-Cys219, Cys184-Cys198, and Cys209-Cys234. The Charge relay system role is filled by His65. An N-linked (GlcNAc...) asparagine glycan is attached at Asn102. Asp120 functions as the Charge relay system in the catalytic mechanism. Residue Ser213 is the Charge relay system of the active site.

This sequence belongs to the peptidase S1 family. Kallikrein subfamily.

The catalysed reaction is Hydrolyzes mouse Ren2 protein (a species of prorenin present in the submandibular gland) on the carboxy side of the arginine residue at the Lys-Arg-|- pair in the N-terminus, to yield mature renin.. In terms of biological role, cleaves REN2 at a dibasic site to yield mature renin. This Mus musculus (Mouse) protein is Epidermal growth factor-binding protein type B (Egfbp2).